The primary structure comprises 139 residues: Large ribosomal subunit protein eL32 (139 aa).

This sequence belongs to the eukaryotic ribosomal protein eL32 family.

The protein is Large ribosomal subunit protein eL32 (RPL32) of Encephalitozoon cuniculi (strain GB-M1) (Microsporidian parasite).